The following is a 429-amino-acid chain: 3-phosphoshikimate 1-carboxyvinyltransferase (429 aa).

Residues lysine 21, serine 22, and arginine 26 each contribute to the 3-phosphoshikimate site. A phosphoenolpyruvate-binding site is contributed by lysine 21. Glycine 94 and arginine 122 together coordinate phosphoenolpyruvate. 3-phosphoshikimate-binding residues include serine 167, glutamine 169, aspartate 315, and lysine 342. Glutamine 169 is a binding site for phosphoenolpyruvate. The active-site Proton acceptor is aspartate 315. 2 residues coordinate phosphoenolpyruvate: arginine 346 and arginine 388.

The protein belongs to the EPSP synthase family. As to quaternary structure, monomer.

The protein localises to the cytoplasm. It carries out the reaction 3-phosphoshikimate + phosphoenolpyruvate = 5-O-(1-carboxyvinyl)-3-phosphoshikimate + phosphate. It participates in metabolic intermediate biosynthesis; chorismate biosynthesis; chorismate from D-erythrose 4-phosphate and phosphoenolpyruvate: step 6/7. In terms of biological role, catalyzes the transfer of the enolpyruvyl moiety of phosphoenolpyruvate (PEP) to the 5-hydroxyl of shikimate-3-phosphate (S3P) to produce enolpyruvyl shikimate-3-phosphate and inorganic phosphate. The polypeptide is 3-phosphoshikimate 1-carboxyvinyltransferase (Desulforudis audaxviator (strain MP104C)).